We begin with the raw amino-acid sequence, 644 residues long: Exoribonuclease 2 (644 aa).

The RNB domain occupies 189–516 (RQDLTALNFV…NHRLLKAVIK (328 aa)). The 83-residue stretch at 561–643 (NTRFAAEIID…ETRSIIARPA (83 aa)) folds into the S1 motif domain.

Belongs to the RNR ribonuclease family. RNase II subfamily.

It is found in the cytoplasm. It carries out the reaction Exonucleolytic cleavage in the 3'- to 5'-direction to yield nucleoside 5'-phosphates.. In terms of biological role, involved in mRNA degradation. Hydrolyzes single-stranded polyribonucleotides processively in the 3' to 5' direction. This Salmonella typhi protein is Exoribonuclease 2.